Here is a 353-residue protein sequence, read N- to C-terminus: Divinyl chlorophyll a/b light-harvesting protein PcbG (353 aa).

6 consecutive transmembrane segments (helical) span residues 28 to 48, 64 to 84, 90 to 110, 204 to 224, 244 to 264, and 308 to 328; these read FISSHIAHTGLICFGAGANTL, GLVVLPHLAGLGLGGISNGVF, LLVVAILHLILSGVYGGGGML, IMGGHAFLAFFMAAGGVFHIL, FVLSTSLAGAAYTAFVAALWC, and LTNVHFFIGFFYLQGHFFHGL.

It belongs to the PsbB/PsbC family. IsiA/Pcb subfamily. As to quaternary structure, the antenna complex consists of divinyl chlorophylls (a and b) and divinyl chlorophyll a/b binding proteins and binds more divinyl chlorophyll b than does the antenna complex from high-light-adapted Prochlorococcus. Also forms complexes with PSI, consisting of a PSI trimer with surrounded by a PcbG ring (probably with 18 subunits). Is the only subunit found in this ring under iron-replete conditions. Divinyl chlorophyll a is required as a cofactor. The cofactor is divinyl chlorophyll b.

It is found in the cellular thylakoid membrane. The antenna complex functions as a light receptor, it captures and delivers excitation energy to photosystems I. The Prochlorales pcb genes are not related to higher plant LHCs. This Prochlorococcus marinus (strain SARG / CCMP1375 / SS120) protein is Divinyl chlorophyll a/b light-harvesting protein PcbG (pcbG).